Reading from the N-terminus, the 241-residue chain is Dolichol-phosphate mannosyltransferase subunit 1 (241 aa).

11 residues coordinate GDP-alpha-D-mannose: proline 13, tyrosine 15, glutamate 17, isoleucine 44, aspartate 46, aspartate 99, alanine 100, aspartate 101, arginine 128, arginine 215, and lysine 221. Aspartate 101 serves as a coordination point for Mg(2+). Mn(2+) is bound at residue aspartate 101.

This sequence belongs to the glycosyltransferase 2 family. The cofactor is Mg(2+). Mn(2+) serves as cofactor. It depends on Ca(2+) as a cofactor.

Its subcellular location is the endoplasmic reticulum. The catalysed reaction is a di-trans,poly-cis-dolichyl phosphate + GDP-alpha-D-mannose = a di-trans,poly-cis-dolichyl beta-D-mannosyl phosphate + GDP. Its pathway is protein modification; protein glycosylation. Its function is as follows. Transfers mannose from GDP-mannose to dolichol monophosphate to form dolichol phosphate mannose (Dol-P-Man) which is the mannosyl donor in pathways leading to N-glycosylation, glycosyl phosphatidylinositol membrane anchoring, and O-mannosylation of proteins. This is Dolichol-phosphate mannosyltransferase subunit 1 from Drosophila melanogaster (Fruit fly).